A 4262-amino-acid chain; its full sequence is Polyketide synthase PksM (4262 aa).

The tract at residues 1–114 (MITEQLHISL…ADMHRKEQTA (114 aa)) is N-terminal hotdog fold 1. Residues 1 to 271 (MITEQLHISL…GKSVRNMSAF (271 aa)) enclose the PKS/mFAS DH 1 domain. Catalysis depends on H18, which acts as the Proton acceptor; for dehydratase activity 1. Residues 129 to 271 (DRILNLDEIY…GKSVRNMSAF (143 aa)) are C-terminal hotdog fold 1. D190 functions as the Proton donor; for dehydratase activity 1 in the catalytic mechanism. The Carrier 1 domain occupies 293–367 (PAFEMYLRQL…ELAAHLADHY (75 aa)). An O-(pantetheine 4'-phosphoryl)serine modification is found at S327. In terms of domain architecture, Ketosynthase family 3 (KS3) 1 spans 393–831 (GEDIAIIGMA…GSNAHLILEE (439 aa)). Residues C569, H704, and H744 each act as for beta-ketoacyl synthase 1 activity in the active site. The interval 1009–1135 (HPLVHRNTSD…GRAVISDEAE (127 aa)) is N-terminal hotdog fold 2. Residues 1009 to 1301 (HPLVHRNTSD…MRALDGEQHS (293 aa)) form the PKS/mFAS DH 2 domain. The active-site Proton acceptor; for dehydratase activity 2 is H1038. The C-terminal hotdog fold 2 stretch occupies residues 1149–1301 (SLDTVTSEQC…MRALDGEQHS (153 aa)). D1211 serves as the catalytic Proton donor; for dehydratase activity 2. The Carrier 2 domain maps to 2188-2261 (EKSTEYMKKL…ALVEHFIKTK (74 aa)). S2222 is modified (O-(pantetheine 4'-phosphoryl)serine). Residues 2275–2291 (VQQHTPAESRTQSSQKP) are compositionally biased toward polar residues. Residues 2275-2313 (VQQHTPAESRTQSSQKPDQAAKRTRRFRKLGFSGEKETP) are disordered. The Ketosynthase family 3 (KS3) 2 domain occupies 2319 to 2734 (SRDVAVIGIS…GSNAHIILEE (416 aa)). Active-site for beta-ketoacyl synthase 2 activity residues include C2476, H2611, and H2651. Positions 2750 to 2826 (ALIVLSAKNM…DFIENKADSL (77 aa)) form a coiled coil. Residues 3409–3486 (SIEKRLEHDL…ELISFFLTDH (78 aa)) enclose the Carrier 3 domain. At S3446 the chain carries O-(pantetheine 4'-phosphoryl)serine. One can recognise a Ketosynthase family 3 (KS3) 3 domain in the interval 3529–3944 (DEPIAIIGMS…GTNAHAVIEE (416 aa)). Residues C3690, H3825, and H3865 each act as for beta-ketoacyl synthase 3 activity in the active site. Residues 4004–4033 (KAMEARLAIVANNQEQLVRKLKEYVEAMKN) adopt a coiled-coil conformation. Residues 4135-4212 (NGKTHIQKII…ALSDHLALKA (78 aa)) form the Carrier 4 domain. S4172 carries the O-(pantetheine 4'-phosphoryl)serine modification.

Requires pantetheine 4'-phosphate as cofactor.

Its subcellular location is the cytoplasm. It functions in the pathway antibiotic biosynthesis; bacillaene biosynthesis. Involved in some intermediate steps for the synthesis of the antibiotic polyketide bacillaene which is involved in secondary metabolism. This chain is Polyketide synthase PksM (pksM), found in Bacillus subtilis (strain 168).